The chain runs to 540 residues: Decreased expression in renal and prostate cancer protein (540 aa).

Over residues 1-12 the composition is skewed to basic and acidic residues; it reads MKEPRIFPRERP. 2 disordered regions span residues 1-264 and 304-389; these read MKEP…DARA and SQAS…AFSQ. 2 stretches are compositionally biased toward low complexity: residues 113-125 and 180-192; these read PRPG…SPGS and GPSL…LTPG. A compositionally biased stretch (polar residues) spans 304–316; the sequence is SQASGNMGTSPSS. Position 313 is a phosphoserine (Ser-313). Over residues 321–330 the composition is skewed to low complexity; that stretch reads PGPIGPNSGP. Asymmetric dimethylarginine is present on Arg-375. Position 403 is an omega-N-methylarginine (Arg-403). Residue Ser-439 is modified to Phosphoserine. The tract at residues 516–540 is disordered; it reads GTNPAAFPRPGGPMAAMYPNGMLPP.

This sequence belongs to the DERPC family.

It is found in the nucleus. In terms of biological role, potential tumor suppressor. This chain is Decreased expression in renal and prostate cancer protein, found in Bos taurus (Bovine).